Consider the following 177-residue polypeptide: Peptidoglycan-associated lipoprotein (177 aa).

A signal peptide spans 1–32 (MSRTNISALSPMQKLARNPAVIAMTLALALAG). Cys33 carries the N-palmitoyl cysteine lipid modification. Cys33 is lipidated: S-diacylglycerol cysteine. Positions 59-176 (QQDFTVNVGD…RAVTVLGGAG (118 aa)) constitute an OmpA-like domain.

This sequence belongs to the Pal lipoprotein family. As to quaternary structure, the Tol-Pal system is composed of five core proteins: the inner membrane proteins TolA, TolQ and TolR, the periplasmic protein TolB and the outer membrane protein Pal. They form a network linking the inner and outer membranes and the peptidoglycan layer.

The protein localises to the cell outer membrane. Functionally, part of the Tol-Pal system, which plays a role in outer membrane invagination during cell division and is important for maintaining outer membrane integrity. The chain is Peptidoglycan-associated lipoprotein from Agrobacterium fabrum (strain C58 / ATCC 33970) (Agrobacterium tumefaciens (strain C58)).